Consider the following 90-residue polypeptide: UPF0335 protein RPB_1426 (90 aa).

The protein belongs to the UPF0335 family.

The polypeptide is UPF0335 protein RPB_1426 (Rhodopseudomonas palustris (strain HaA2)).